The following is a 125-amino-acid chain: Holo-[acyl-carrier-protein] synthase (125 aa).

Aspartate 8 and glutamate 57 together coordinate Mg(2+).

This sequence belongs to the P-Pant transferase superfamily. AcpS family. It depends on Mg(2+) as a cofactor.

Its subcellular location is the cytoplasm. It carries out the reaction apo-[ACP] + CoA = holo-[ACP] + adenosine 3',5'-bisphosphate + H(+). Functionally, transfers the 4'-phosphopantetheine moiety from coenzyme A to a Ser of acyl-carrier-protein. The protein is Holo-[acyl-carrier-protein] synthase of Aromatoleum aromaticum (strain DSM 19018 / LMG 30748 / EbN1) (Azoarcus sp. (strain EbN1)).